We begin with the raw amino-acid sequence, 141 residues long: Hemoglobin subunit alpha-1/2 (141 aa).

Residues Val-1–Arg-141 form the Globin domain. The residue at position 3 (Ser-3) is a Phosphoserine. Lys-7 bears the N6-succinyllysine mark. Thr-8 is modified (phosphothreonine). Position 11 is an N6-succinyllysine (Lys-11). Lys-16 carries the post-translational modification N6-acetyllysine; alternate. Lys-16 is subject to N6-succinyllysine; alternate. Tyr-24 carries the post-translational modification Phosphotyrosine. Position 40 is an N6-succinyllysine (Lys-40). A Phosphoserine modification is found at Ser-49. Position 58 (His-58) interacts with O2. His-87 serves as a coordination point for heme b. Residue Ser-102 is modified to Phosphoserine. Thr-108 is subject to Phosphothreonine. Ser-124 is modified (phosphoserine). Phosphothreonine occurs at positions 134 and 137. Ser-138 bears the Phosphoserine mark.

The protein belongs to the globin family. As to quaternary structure, heterotetramer of two alpha chains and two beta chains. In terms of tissue distribution, red blood cells.

Its function is as follows. Involved in oxygen transport from the lung to the various peripheral tissues. The protein is Hemoglobin subunit alpha-1/2 of Tapirus terrestris (Lowland tapir).